A 305-amino-acid chain; its full sequence is Oxygen-dependent coproporphyrinogen-III oxidase (305 aa).

Residue Ser-92 participates in substrate binding. Positions 96 and 106 each coordinate a divalent metal cation. Catalysis depends on His-106, which acts as the Proton donor. 108-110 lines the substrate pocket; it reads NVR. Residues His-145 and His-175 each contribute to the a divalent metal cation site. Positions 239–274 are important for dimerization; it reads YVEFNLLFDRGTLFGLQSGGRAESILISLPPLVRWE. 257–259 is a binding site for substrate; the sequence is GGR.

The protein belongs to the aerobic coproporphyrinogen-III oxidase family. Homodimer. Requires a divalent metal cation as cofactor.

It is found in the cytoplasm. It catalyses the reaction coproporphyrinogen III + O2 + 2 H(+) = protoporphyrinogen IX + 2 CO2 + 2 H2O. Its pathway is porphyrin-containing compound metabolism; protoporphyrin-IX biosynthesis; protoporphyrinogen-IX from coproporphyrinogen-III (O2 route): step 1/1. Its function is as follows. Involved in the heme biosynthesis. Catalyzes the aerobic oxidative decarboxylation of propionate groups of rings A and B of coproporphyrinogen-III to yield the vinyl groups in protoporphyrinogen-IX. This is Oxygen-dependent coproporphyrinogen-III oxidase from Xylella fastidiosa (strain 9a5c).